Consider the following 284-residue polypeptide: 8-methylmenaquinol:fumarate reductase membrane anchor subunit (284 aa).

As to quaternary structure, the MFR complex is composed of three subunits: a flavoprotein (SdhA), an iron-sulfur protein (SdhB), and one hydrophobic anchor protein (SdhE).

It is found in the periplasm. The protein resides in the cell membrane. The enzyme catalyses 8-methylmenaquinone-6 + succinate = 8-methylmenaquinol-6 + fumarate. Its function is as follows. Membrane anchor subunit of 8-methylmenaquinol:fumarate reductase (MFR), that catalyzes the reduction of fumarate using 8-methylmenaquinol-6 as electron donor. The complex shows no succinate oxidation activity. Is involved in anaerobic metabolism. SdhE likely contains the quinol/quinone binding site. The sequence is that of 8-methylmenaquinol:fumarate reductase membrane anchor subunit from Wolinella succinogenes (strain ATCC 29543 / DSM 1740 / CCUG 13145 / JCM 31913 / LMG 7466 / NCTC 11488 / FDC 602W) (Vibrio succinogenes).